A 405-amino-acid polypeptide reads, in one-letter code: UDP-N-acetylglucosamine--N-acetylmuramyl-(pentapeptide) pyrophosphoryl-undecaprenol N-acetylglucosamine transferase (405 aa).

UDP-N-acetyl-alpha-D-glucosamine-binding positions include 11-13 (TGG), asparagine 127, arginine 168, serine 191, isoleucine 248, and glutamine 293.

This sequence belongs to the glycosyltransferase 28 family. MurG subfamily.

It is found in the cell inner membrane. It catalyses the reaction di-trans,octa-cis-undecaprenyl diphospho-N-acetyl-alpha-D-muramoyl-L-alanyl-D-glutamyl-meso-2,6-diaminopimeloyl-D-alanyl-D-alanine + UDP-N-acetyl-alpha-D-glucosamine = di-trans,octa-cis-undecaprenyl diphospho-[N-acetyl-alpha-D-glucosaminyl-(1-&gt;4)]-N-acetyl-alpha-D-muramoyl-L-alanyl-D-glutamyl-meso-2,6-diaminopimeloyl-D-alanyl-D-alanine + UDP + H(+). It functions in the pathway cell wall biogenesis; peptidoglycan biosynthesis. Cell wall formation. Catalyzes the transfer of a GlcNAc subunit on undecaprenyl-pyrophosphoryl-MurNAc-pentapeptide (lipid intermediate I) to form undecaprenyl-pyrophosphoryl-MurNAc-(pentapeptide)GlcNAc (lipid intermediate II). The polypeptide is UDP-N-acetylglucosamine--N-acetylmuramyl-(pentapeptide) pyrophosphoryl-undecaprenol N-acetylglucosamine transferase (Sorangium cellulosum (strain So ce56) (Polyangium cellulosum (strain So ce56))).